A 423-amino-acid polypeptide reads, in one-letter code: Kynurenine--oxoglutarate transaminase 1 (423 aa).

Residue Gly-36 participates in substrate binding. Lys-82 is modified (N6-succinyllysine). Asn-185 serves as a coordination point for substrate. Lys-247 is modified (N6-(pyridoxal phosphate)lysine). Arg-398 contributes to the substrate binding site.

It belongs to the class-I pyridoxal-phosphate-dependent aminotransferase family. As to quaternary structure, homodimer. The cofactor is pyridoxal 5'-phosphate. Detected in kidney.

It localises to the cytoplasm. The protein localises to the cytosol. The protein resides in the mitochondrion matrix. It carries out the reaction L-kynurenine + 2-oxoglutarate = kynurenate + L-glutamate + H2O. It catalyses the reaction 3-phenylpyruvate + L-glutamine = 2-oxoglutaramate + L-phenylalanine. The enzyme catalyses an S-substituted L-cysteine + H2O = a thiol + pyruvate + NH4(+). The protein operates within amino-acid degradation; L-kynurenine degradation; kynurenate from L-kynurenine: step 1/2. Inhibited by aminooxyacetate (in vitro). Catalyzes the irreversible transamination of the L-tryptophan metabolite L-kynurenine to form kynurenic acid (KA), an intermediate in the tryptophan catabolic pathway which is also a broad spectrum antagonist of the three ionotropic excitatory amino acid receptors among others. Metabolizes the cysteine conjugates of certain halogenated alkenes and alkanes to form reactive metabolites. Catalyzes the beta-elimination of S-conjugates and Se-conjugates of L-(seleno)cysteine, resulting in the cleavage of the C-S or C-Se bond. In Rattus norvegicus (Rat), this protein is Kynurenine--oxoglutarate transaminase 1.